The following is a 532-amino-acid chain: Probable 1,4-beta-D-glucan cellobiohydrolase B (532 aa).

A signal peptide spans 1-26 (MLASTFSYRMYKTALILAALLGSGQA). The interval 27–461 (QQVGTSQAEV…SNIKVGPIGS (435 aa)) is catalytic. Glutamate 238 serves as the catalytic Nucleophile. Catalysis depends on glutamate 243, which acts as the Proton donor. A glycan (N-linked (GlcNAc...) asparagine) is linked at asparagine 296. A disordered region spans residues 462-495 (TFNSGGSNPGGGTTTTTTTQPTTTTTTAGNPGGT). The interval 462–496 (TFNSGGSNPGGGTTTTTTTQPTTTTTTAGNPGGTG) is thr-rich linker. Positions 475–490 (TTTTTTQPTTTTTTAG) are enriched in low complexity. The region spanning 496–532 (GVAQHYGQCGGIGWTGPTTCASPYTCQKLNDYYSQCL) is the CBM1 domain. 2 disulfides stabilise this stretch: cysteine 504/cysteine 521 and cysteine 515/cysteine 531.

The protein belongs to the glycosyl hydrolase 7 (cellulase C) family.

It is found in the secreted. The enzyme catalyses Hydrolysis of (1-&gt;4)-beta-D-glucosidic linkages in cellulose and cellotetraose, releasing cellobiose from the non-reducing ends of the chains.. Its function is as follows. The biological conversion of cellulose to glucose generally requires three types of hydrolytic enzymes: (1) Endoglucanases which cut internal beta-1,4-glucosidic bonds; (2) Exocellobiohydrolases that cut the disaccharide cellobiose from the non-reducing end of the cellulose polymer chain; (3) Beta-1,4-glucosidases which hydrolyze the cellobiose and other short cello-oligosaccharides to glucose. This chain is Probable 1,4-beta-D-glucan cellobiohydrolase B (cbhB), found in Aspergillus fumigatus (strain CBS 144.89 / FGSC A1163 / CEA10) (Neosartorya fumigata).